Reading from the N-terminus, the 798-residue chain is PR domain zinc finger protein 4 (798 aa).

The SET domain occupies 408 to 525 (KQLVLRQSIV…PENELLFYYS (118 aa)). 5 consecutive C2H2-type zinc fingers follow at residues 586 to 608 (WKCS…FMGH), 614 to 636 (HKCD…LKIH), 642 to 664 (YRCT…MVIH), 670 to 692 (LKCD…VLIH), and 698 to 720 (IKCP…LNSH). The C2H2-type 6; degenerate zinc finger occupies 726-747 (YVCEKCTKAYLTKYHLTRHLKA). The segment at 750 to 798 (EPASSSSAQDDEDEDGDSGEDGLPGSMTTEGCRMSSAVYSADESLSAHK) is disordered. A compositionally biased stretch (acidic residues) spans 758–769 (QDDEDEDGDSGE).

It belongs to the class V-like SAM-binding methyltransferase superfamily.

It localises to the nucleus. In terms of biological role, may function as a transcription factor involved in cell differentiation. The polypeptide is PR domain zinc finger protein 4 (Prdm4) (Rattus norvegicus (Rat)).